Here is a 197-residue protein sequence, read N- to C-terminus: Beta-crystallin A2 (197 aa).

Positions methionine 1 to proline 11 are N-terminal arm. Beta/gamma crystallin 'Greek key' domains follow at residues alanine 12–asparagine 52 and glycine 53–leucine 99. The interval cysteine 100–aspartate 105 is connecting peptide. Beta/gamma crystallin 'Greek key' domains lie at serine 106–serine 147 and glycine 148–glutamine 196.

Belongs to the beta/gamma-crystallin family. Homo/heterodimer, or complexes of higher-order. The structure of beta-crystallin oligomers seems to be stabilized through interactions between the N-terminal arms.

Its function is as follows. Crystallins are the dominant structural components of the vertebrate eye lens. In Bos taurus (Bovine), this protein is Beta-crystallin A2 (CRYBA2).